The sequence spans 126 residues: MPEPAKSAPAPKKGSKKAVTKTQKKGDKKRRKTRKESYAIYVYKVLKQVHPDTGISSKAMGIMNSFVNDIFERIAGEASRLAHYNKRSTITSREIQTAVRLLLPGELAKHAVSEGTKAVTKYTSSK.

Over residues 1-12 the composition is skewed to low complexity; that stretch reads MPEPAKSAPAPK. The disordered stretch occupies residues 1 to 34; it reads MPEPAKSAPAPKKGSKKAVTKTQKKGDKKRRKTR. K6 and K13 each carry N6-acetyllysine. Residues 13–34 show a composition bias toward basic residues; sequence KGSKKAVTKTQKKGDKKRRKTR. Phosphoserine is present on S15. N6-acetyllysine is present on residues K16 and K21. S113 carries an O-linked (GlcNAc) serine glycan. A Glycyl lysine isopeptide (Lys-Gly) (interchain with G-Cter in ubiquitin) cross-link involves residue K121.

The protein belongs to the histone H2B family. The nucleosome is a histone octamer containing two molecules each of H2A, H2B, H3 and H4 assembled in one H3-H4 heterotetramer and two H2A-H2B heterodimers. The octamer wraps approximately 147 bp of DNA. Post-translationally, monoubiquitination of Lys-121 by the BRE1 gives a specific tag for epigenetic transcriptional activation and is also prerequisite for histone H3 'Lys-4' and 'Lys-79' methylation. Phosphorylated on Ser-15 during apoptosis; which facilitates apoptotic chromatin condensation. In terms of processing, glcNAcylation at Ser-113 promotes monoubiquitination of Lys-121. It fluctuates in response to extracellular glucose, and associates with transcribed genes.

Its subcellular location is the nucleus. It localises to the chromosome. In terms of biological role, core component of nucleosome. Nucleosomes wrap and compact DNA into chromatin, limiting DNA accessibility to the cellular machineries which require DNA as a template. Histones thereby play a central role in transcription regulation, DNA repair, DNA replication and chromosomal stability. DNA accessibility is regulated via a complex set of post-translational modifications of histones, also called histone code, and nucleosome remodeling. The protein is Histone H2B 3 (hist2h2l) of Danio rerio (Zebrafish).